The primary structure comprises 290 residues: Putative transport permease ycf38 (290 aa).

7 consecutive transmembrane segments (helical) span residues 21 to 41, 46 to 66, 86 to 106, 133 to 153, 167 to 187, 194 to 213, and 261 to 281; these read VTSFFFIQELFVLVKRLFIQL, ITLISGILQPLLWLILFGALF, PGILVFTAFAGSLNSSLPLIF, FFISVLSFIQVFFIMLFGVFL, FFFLFLLIIGITTFSILLALL, LIAVIFVLNLPLLFSSTALA, and INIGQSLIILIIFDLVGFLLF. Positions 46-284 constitute an ABC transmembrane type-2 domain; that stretch reads ITLISGILQP…LVGFLLFKKI (239 aa).

This sequence belongs to the ABC-2 integral membrane protein family.

Its subcellular location is the plastid. The protein resides in the cyanelle membrane. The protein is Putative transport permease ycf38 (ycf38) of Cyanophora paradoxa.